Reading from the N-terminus, the 524-residue chain is Pentatricopeptide repeat-containing protein At1g02150 (524 aa).

7 PPR repeats span residues 168–202, 203–237, 238–268, 274–304, 309–339, 344–378, and 379–413; these read DRRV…GYAL, HPLP…DIRL, DIYS…MKSD, NWTT…VEAR, NRIP…YKSV, PNLG…KSSY, and DPRI…GGKP.

This sequence belongs to the PPR family. P subfamily.

This Arabidopsis thaliana (Mouse-ear cress) protein is Pentatricopeptide repeat-containing protein At1g02150.